The primary structure comprises 423 residues: CinA-like protein (423 aa).

The protein belongs to the CinA family.

The sequence is that of CinA-like protein from Prochlorococcus marinus (strain SARG / CCMP1375 / SS120).